Consider the following 147-residue polypeptide: MFSLNTIAPALGAKRVGKRVARGIGSGFGKTAGRGHKGQKSRSGCKIKVSFEGGQTPLHRRLPKFGFKSRKSIVTQEITLFDLSRIPENVIDLNVLKKYDIVSRKIRFVKIIMSGTFDKPVIIRNLRISKGARDLIKSVGGRIEEGE.

This sequence belongs to the universal ribosomal protein uL15 family. As to quaternary structure, part of the 50S ribosomal subunit.

In terms of biological role, binds to the 23S rRNA. This Blochmanniella floridana protein is Large ribosomal subunit protein uL15.